The sequence spans 742 residues: Alginate lyase (742 aa).

An N-terminal signal peptide occupies residues 1–26; it reads MRLQPLFVSLALAAPCALLPTASLSA. Residues Arg-143, 153 to 156, Gln-204, His-208, and 263 to 266 contribute to the substrate site; these read QVLN and YYQR. Tyr-264 (proton donor) is an active-site residue. Residue His-418 is the Proton acceptor of the active site. His-420 and Asp-438 together coordinate Zn(2+). Residue Arg-443 participates in substrate binding. His-469 is a binding site for Zn(2+). Substrate is bound at residue Glu-669.

This sequence belongs to the polysaccharide lyase 17 family. In terms of assembly, homodimer. It depends on Zn(2+) as a cofactor.

It localises to the periplasm. The enzyme catalyses Cleavage of 4-deoxy-alpha-L-erythro-hex-4-enopyranuronoside oligosaccharides into 4-deoxy-alpha-L-erythro-hex-4-enopyranuronate monosaccharides.. In terms of biological role, polysaccharide lyase that catalyzes the depolymerization of alginate via a beta-elimination mechanism, cleaving the beta-1,4 glycosidic bond between two adjacent sugar residues. Acts specifically on alginate and each of its block structures, with highest activity toward poly-beta-D-mannuronate (poly-ManA). Shows an exolytic mode of action, producing unsaturated monomers. Displays a very low activity against poly-beta-D-glucuronate (poly-GlcA), and is not active on poly-alpha-D-galacturonate, hyaluronan, heparin, heparan sulfate and chondroitin sulfate. This Stenotrophomonas maltophilia (strain K279a) protein is Alginate lyase.